We begin with the raw amino-acid sequence, 256 residues long: Acetyl-coenzyme A carboxylase carboxyl transferase subunit beta 2 (256 aa).

The CoA carboxyltransferase N-terminal domain occupies M1–A256. Positions 5, 8, 24, and 27 each coordinate Zn(2+). The segment at C5–C27 adopts a C4-type zinc-finger fold.

It belongs to the AccD/PCCB family. Acetyl-CoA carboxylase is a heterohexamer composed of biotin carboxyl carrier protein (AccB), biotin carboxylase (AccC) and two subunits each of ACCase subunit alpha (AccA) and ACCase subunit beta (AccD). Zn(2+) is required as a cofactor.

The protein resides in the cytoplasm. The catalysed reaction is N(6)-carboxybiotinyl-L-lysyl-[protein] + acetyl-CoA = N(6)-biotinyl-L-lysyl-[protein] + malonyl-CoA. It functions in the pathway lipid metabolism; malonyl-CoA biosynthesis; malonyl-CoA from acetyl-CoA: step 1/1. Component of the acetyl coenzyme A carboxylase (ACC) complex. Biotin carboxylase (BC) catalyzes the carboxylation of biotin on its carrier protein (BCCP) and then the CO(2) group is transferred by the transcarboxylase to acetyl-CoA to form malonyl-CoA. The protein is Acetyl-coenzyme A carboxylase carboxyl transferase subunit beta 2 of Lachnospira eligens (strain ATCC 27750 / DSM 3376 / VPI C15-48 / C15-B4) (Eubacterium eligens).